The primary structure comprises 157 residues: Thioredoxin-T (157 aa).

One can recognise a Thioredoxin domain in the interval 2–107; it reads VYPVRNKDDL…LAKLMEKHAG (106 aa). Cysteines 32 and 35 form a disulfide. The segment at 132–157 is disordered; that stretch reads ESSESDNDNNNVNEVSAHDENAVLEH. Residues 147–157 are compositionally biased toward basic and acidic residues; that stretch reads SAHDENAVLEH.

It belongs to the thioredoxin family. As to expression, testis specific. Not expressed in the embryo. Becomes progressively more strongly expressed during larval and pupal development. In testis, it is strongly expressed in young spermatocytes, and postmeiotic spermatid stages, then expression decreases at the nuclear elongation stage. Strongly expressed in the waste bag, in which material no longer needed for the mature sperm is eliminated. Not expressed in the stem cells and spermatogonial cells.

It is found in the nucleus. The protein resides in the chromosome. Its function is as follows. Probably participates in various redox reactions through the reversible oxidation of its active center dithiol to a disulfide and catalyzes dithiol-disulfide exchange reactions. Its tissue specificity suggests a regulatory role in the germline. This is Thioredoxin-T (TrxT) from Drosophila melanogaster (Fruit fly).